Reading from the N-terminus, the 315-residue chain is Calumenin-A (315 aa).

The N-terminal stretch at 1-19 (MEIRPLLMCFALCVVYATS) is a signal peptide. EF-hand domains are found at residues 68-103 (ESKNRLGKIVEKIDADEDGFVTEAELKAWIKKAQKK), 104-139 (YIYDNVERQWKDFDLNNDRMISWEEYKNVTYGTYLD), 151-186 (QMMARDERRFKMADGNGDHIADKEEFTAFLHPEEYE), 188-223 (MKDIVVLETMEDIDKNGDGFIDLEEYIGDMYNHEDE), 229-264 (WVATEREQFSEFRDKNKDGKMDREETMDWILPADYD), and 265-300 (HAEAEAKHLVYESDTNKDGKLTKEEILNKYDLFVGS). The Ca(2+) site is built by aspartate 81, aspartate 83, aspartate 85, glutamate 92, aspartate 117, asparagine 119, aspartate 121, methionine 123, and glutamate 128. N-linked (GlcNAc...) asparagine glycosylation occurs at asparagine 131. 18 residues coordinate Ca(2+): aspartate 164, asparagine 166, aspartate 168, glutamate 175, aspartate 201, asparagine 203, aspartate 205, glutamate 212, aspartate 242, asparagine 244, aspartate 246, lysine 248, glutamate 253, aspartate 278, asparagine 280, aspartate 282, lysine 284, and glutamate 289. The Prevents secretion from ER motif lies at 312-315 (HDEF).

Belongs to the CREC family. Interacts with ggcx.

Its subcellular location is the endoplasmic reticulum membrane. It localises to the golgi apparatus. It is found in the secreted. The protein localises to the melanosome. The protein resides in the sarcoplasmic reticulum lumen. Its function is as follows. Involved in regulation of vitamin K-dependent carboxylation of multiple N-terminal glutamate residues. Seems to inhibit gamma-carboxylase ggcx. Binds 7 calcium ions with a low affinity. This chain is Calumenin-A (calua), found in Danio rerio (Zebrafish).